Reading from the N-terminus, the 379-residue chain is DnaJ homolog subfamily B member 14 (379 aa).

Residues 1–244 (MEGNRDEAEK…GHEREEERGD (244 aa)) lie on the Cytoplasmic side of the membrane. Positions 55 to 94 (STAGNSPHCRKPSGSGDQSKPNCTKDSTSGSGEGGKGYTK) are disordered. The span at 69-84 (SGDQSKPNCTKDSTSG) shows a compositional bias: polar residues. One can recognise a J domain in the interval 108-172 (NYYEVLGVTK…EKRKQYDLTG (65 aa)). Residues 219-241 (SNGRAGYSQQHQHRHSGHEREEE) form a disordered region. Residues 245 to 265 (GGFSVFIQLMPIIVLILVSLL) traverse the membrane as a helical segment. Residues 266 to 379 (SQLMVSNPPY…ERLTSLYKGG (114 aa)) are Lumenal-facing.

Belongs to the DnaJ family. DNAJB12/DNAJB14 subfamily. In terms of assembly, interacts (via J domain) with HSPA8/Hsc70. Forms a multiprotein complex, at least composed of DNAJB12, DNAJB14, HSPA8/Hsc70 and SGTA; interaction with DNAJB14 and HSPA8/Hsc70 is direct.

Its subcellular location is the endoplasmic reticulum membrane. The protein resides in the nucleus membrane. In terms of biological role, acts as a co-chaperone with HSPA8/Hsc70; required to promote protein folding and trafficking, prevent aggregation of client proteins, and promote unfolded proteins to endoplasmic reticulum-associated degradation (ERAD) pathway. Acts by determining HSPA8/Hsc70's ATPase and polypeptide-binding activities. Can also act independently of HSPA8/Hsc70: together with DNAJB12, acts as a chaperone that promotes maturation of potassium channels KCND2 and KCNH2 by stabilizing nascent channel subunits and assembling them into tetramers. While stabilization of nascent channel proteins is dependent on HSPA8/Hsc70, the process of oligomerization of channel subunits is independent of HSPA8/Hsc70. When overexpressed, forms membranous structures together with DNAJB12 and HSPA8/Hsc70 within the nucleus; the role of these structures, named DJANGOs, is still unclear. (Microbial infection) In case of infection by polyomavirus, involved in the virus endoplasmic reticulum membrane penetration and infection. The polypeptide is DnaJ homolog subfamily B member 14 (Homo sapiens (Human)).